The chain runs to 426 residues: Serine--tRNA ligase (426 aa).

233–235 (TSE) serves as a coordination point for L-serine. 264–266 (RAE) is a binding site for ATP. Residue Glu-287 participates in L-serine binding. An ATP-binding site is contributed by 351–354 (EISS). Ser-387 is a binding site for L-serine.

Belongs to the class-II aminoacyl-tRNA synthetase family. Type-1 seryl-tRNA synthetase subfamily. In terms of assembly, homodimer. The tRNA molecule binds across the dimer.

The protein localises to the cytoplasm. The catalysed reaction is tRNA(Ser) + L-serine + ATP = L-seryl-tRNA(Ser) + AMP + diphosphate + H(+). It carries out the reaction tRNA(Sec) + L-serine + ATP = L-seryl-tRNA(Sec) + AMP + diphosphate + H(+). It functions in the pathway aminoacyl-tRNA biosynthesis; selenocysteinyl-tRNA(Sec) biosynthesis; L-seryl-tRNA(Sec) from L-serine and tRNA(Sec): step 1/1. Catalyzes the attachment of serine to tRNA(Ser). Is also able to aminoacylate tRNA(Sec) with serine, to form the misacylated tRNA L-seryl-tRNA(Sec), which will be further converted into selenocysteinyl-tRNA(Sec). This Stenotrophomonas maltophilia (strain R551-3) protein is Serine--tRNA ligase.